Reading from the N-terminus, the 339-residue chain is Homeobox protein DBX2 (339 aa).

The segment at residues 186 to 245 (GILRRAVFSEDQRKALEKMFQKQKYISKTDRKKLAINLGLKESQVKIWFQNRRMKWRNSK) is a DNA-binding region (homeobox). Residues 282-318 (VPQQHSSPRWRENSPEPSERLIQESSGAPPPEANSLQ) are disordered. A compositionally biased stretch (basic and acidic residues) spans 290 to 303 (RWRENSPEPSERLI).

This sequence belongs to the H2.0 homeobox family.

The protein resides in the nucleus. In Homo sapiens (Human), this protein is Homeobox protein DBX2 (DBX2).